The following is a 105-amino-acid chain: uncharacterized protein (105 aa).

Residues methionine 1–valine 101 form the Hcy-binding domain.

This is an uncharacterized protein from Saccharomyces cerevisiae (strain ATCC 204508 / S288c) (Baker's yeast).